The chain runs to 226 residues: Cytochrome c biogenesis ATP-binding export protein CcmA (226 aa).

The ABC transporter domain maps to Leu-19–Ala-226. Gly-51 to Ser-58 provides a ligand contact to ATP.

This sequence belongs to the ABC transporter superfamily. CcmA exporter (TC 3.A.1.107) family. As to quaternary structure, the complex is composed of two ATP-binding proteins (CcmA) and two transmembrane proteins (CcmB).

The protein localises to the cell inner membrane. It catalyses the reaction heme b(in) + ATP + H2O = heme b(out) + ADP + phosphate + H(+). Part of the ABC transporter complex CcmAB involved in the biogenesis of c-type cytochromes; once thought to export heme, this seems not to be the case, but its exact role is uncertain. Responsible for energy coupling to the transport system. The sequence is that of Cytochrome c biogenesis ATP-binding export protein CcmA from Cupriavidus pinatubonensis (strain JMP 134 / LMG 1197) (Cupriavidus necator (strain JMP 134)).